Reading from the N-terminus, the 171-residue chain is Der GTPase-activating protein YihI (171 aa).

2 disordered regions span residues 1–99 (MKKP…PQAE) and 145–171 (GLSY…KGGN). A compositionally biased stretch (basic and acidic residues) spans 20-30 (TREELNQEARD). Low complexity predominate over residues 40–59 (HSAGSRANGSSASGSTAQNS). Residues 148 to 160 (YEDDEDDEEEEKQ) show a composition bias toward acidic residues.

It belongs to the YihI family. In terms of assembly, interacts with Der.

In terms of biological role, a GTPase-activating protein (GAP) that modifies Der/EngA GTPase function. May play a role in ribosome biogenesis. The chain is Der GTPase-activating protein YihI from Enterobacter sp. (strain 638).